Reading from the N-terminus, the 754-residue chain is tRNA(Met) cytidine acetyltransferase TmcA (754 aa).

The disordered stretch occupies residues 181-202 (GISFDAAPPRVPTEKDRRSPRR). Basic and acidic residues predominate over residues 192 to 202 (PTEKDRRSPRR). ATP contacts are provided by residues glutamine 212, 236 to 245 (GRGKSSAAGL), and arginine 383. The 186-residue stretch at 418–603 (VSYRALSPDD…YSALMTRPLS (186 aa)) folds into the N-acetyltransferase domain. Residues 529–531 (IAT), 536–542 (RSSGLGS), and glutamate 568 each bind acetyl-CoA.

It belongs to the RNA cytidine acetyltransferase family. TmcA subfamily.

The protein localises to the cytoplasm. The catalysed reaction is cytidine(34) in elongator tRNA(Met) + acetyl-CoA + ATP + H2O = N(4)-acetylcytidine(34) in elongator tRNA(Met) + ADP + phosphate + CoA + H(+). Its function is as follows. Catalyzes the formation of N(4)-acetylcytidine (ac(4)C) at the wobble position of tRNA(Met), by using acetyl-CoA as an acetyl donor and ATP (or GTP). The protein is tRNA(Met) cytidine acetyltransferase TmcA of Haloferax volcanii (strain ATCC 29605 / DSM 3757 / JCM 8879 / NBRC 14742 / NCIMB 2012 / VKM B-1768 / DS2) (Halobacterium volcanii).